The sequence spans 443 residues: Probable D-serine dehydratase (443 aa).

Position 118 is an N6-(pyridoxal phosphate)lysine (Lys-118).

Belongs to the serine/threonine dehydratase family. DsdA subfamily. Pyridoxal 5'-phosphate is required as a cofactor.

The enzyme catalyses D-serine = pyruvate + NH4(+). The protein is Probable D-serine dehydratase of Colwellia psychrerythraea (strain 34H / ATCC BAA-681) (Vibrio psychroerythus).